Here is a 249-residue protein sequence, read N- to C-terminus: Hydroxyacylglutathione hydrolase (249 aa).

Residues His-54, His-56, Asp-58, His-59, His-113, Asp-138, and His-176 each contribute to the Zn(2+) site.

Belongs to the metallo-beta-lactamase superfamily. Glyoxalase II family. Monomer. The cofactor is Zn(2+).

It catalyses the reaction an S-(2-hydroxyacyl)glutathione + H2O = a 2-hydroxy carboxylate + glutathione + H(+). Its pathway is secondary metabolite metabolism; methylglyoxal degradation; (R)-lactate from methylglyoxal: step 2/2. Its function is as follows. Thiolesterase that catalyzes the hydrolysis of S-D-lactoyl-glutathione to form glutathione and D-lactic acid. This Synechococcus sp. (strain CC9605) protein is Hydroxyacylglutathione hydrolase.